The sequence spans 112 residues: ATP synthase epsilon chain (112 aa).

The protein belongs to the ATPase epsilon chain family. As to quaternary structure, F-type ATPases have 2 components, CF(1) - the catalytic core - and CF(0) - the membrane proton channel. CF(1) has five subunits: alpha(3), beta(3), gamma(1), delta(1), epsilon(1). CF(0) has three main subunits: a, b and c.

It is found in the cell inner membrane. Functionally, produces ATP from ADP in the presence of a proton gradient across the membrane. This Rickettsia felis (strain ATCC VR-1525 / URRWXCal2) (Rickettsia azadi) protein is ATP synthase epsilon chain.